The following is a 357-amino-acid chain: Peptide chain release factor 1 (357 aa).

Residue glutamine 234 is modified to N5-methylglutamine. Over residues 284–307 (KKQEQRSNDRKQQVGSGDRSERIR) the composition is skewed to basic and acidic residues. Residues 284-313 (KKQEQRSNDRKQQVGSGDRSERIRTYNFPQ) are disordered.

This sequence belongs to the prokaryotic/mitochondrial release factor family. Methylated by PrmC. Methylation increases the termination efficiency of RF1.

It is found in the cytoplasm. Functionally, peptide chain release factor 1 directs the termination of translation in response to the peptide chain termination codons UAG and UAA. This Borrelia turicatae (strain 91E135) protein is Peptide chain release factor 1.